A 70-amino-acid chain; its full sequence is UPF0337 protein BT9727_3385 (70 aa).

This sequence belongs to the UPF0337 (CsbD) family.

This Bacillus thuringiensis subsp. konkukian (strain 97-27) protein is UPF0337 protein BT9727_3385.